A 90-amino-acid polypeptide reads, in one-letter code: Small ribosomal subunit protein bS16 (90 aa).

It belongs to the bacterial ribosomal protein bS16 family.

In Oceanobacillus iheyensis (strain DSM 14371 / CIP 107618 / JCM 11309 / KCTC 3954 / HTE831), this protein is Small ribosomal subunit protein bS16.